A 242-amino-acid chain; its full sequence is Ras-like protein family member 11A (242 aa).

Residues 17–241 (ESSSDYLLPK…SSKAKAASTL (225 aa)) form a small GTPase-like region. GTP contacts are provided by residues 34–41 (GASCVGKS), 81–85 (DTPGG), and 147–150 (NKGD).

The protein belongs to the small GTPase superfamily. Ras family. As to quaternary structure, interacts with UBF/UBTF.

It localises to the nucleus. It is found in the nucleolus. It carries out the reaction GTP + H2O = GDP + phosphate + H(+). Functionally, regulator of rDNA transcription. Acts in cooperation UBF/UBTF and positively regulates RNA polymerase I transcription. The chain is Ras-like protein family member 11A from Rattus norvegicus (Rat).